A 279-amino-acid chain; its full sequence is Probable endonuclease 4 (279 aa).

Positions 69, 109, 145, 179, 182, 216, 229, 231, and 261 each coordinate Zn(2+).

It belongs to the AP endonuclease 2 family. Requires Zn(2+) as cofactor.

The enzyme catalyses Endonucleolytic cleavage to 5'-phosphooligonucleotide end-products.. In terms of biological role, endonuclease IV plays a role in DNA repair. It cleaves phosphodiester bonds at apurinic or apyrimidinic (AP) sites, generating a 3'-hydroxyl group and a 5'-terminal sugar phosphate. The polypeptide is Probable endonuclease 4 (Desulforapulum autotrophicum (strain ATCC 43914 / DSM 3382 / VKM B-1955 / HRM2) (Desulfobacterium autotrophicum)).